We begin with the raw amino-acid sequence, 393 residues long: High mobility group protein DSP1 (393 aa).

The interval 153-179 is disordered; that stretch reads QMQQQQQQQNVINSASPMSRVKADAKP. DNA-binding regions (HMG box) lie at residues 179–249 and 271–339; these read PRGR…QNYV and PKRS…TEYK. Low complexity predominate over residues 364 to 374; sequence LLAAAAQQQHQ. Residues 364-393 are disordered; sequence LLAAAAQQQHQQLEEQHDDDDGDGDDDENQ. Residues 379–393 are compositionally biased toward acidic residues; that stretch reads QHDDDDGDGDDDENQ.

It belongs to the HMGB family.

The protein resides in the nucleus. Its subcellular location is the chromosome. In terms of biological role, binds preferentially single-stranded DNA and unwinds double-stranded DNA. This chain is High mobility group protein DSP1 (Dsp1), found in Drosophila melanogaster (Fruit fly).